Here is a 390-residue protein sequence, read N- to C-terminus: S-adenosylmethionine synthase 3 (390 aa).

Residue glutamate 9 participates in Mg(2+) binding. An ATP-binding site is contributed by histidine 15. Glutamate 43 provides a ligand contact to K(+). L-methionine is bound by residues glutamate 56 and glutamine 99. Residues 167 to 169, 235 to 238, aspartate 246, 252 to 253, alanine 269, lysine 273, and lysine 277 each bind ATP; these read DGK, SGRF, and RK. Aspartate 246 serves as a coordination point for L-methionine. L-methionine is bound at residue lysine 277.

It belongs to the AdoMet synthase family. As to quaternary structure, homotetramer. Mn(2+) serves as cofactor. It depends on Mg(2+) as a cofactor. Co(2+) is required as a cofactor. Requires K(+) as cofactor. In terms of tissue distribution, mostly expressed in stems and leaves.

The protein localises to the cytoplasm. The enzyme catalyses L-methionine + ATP + H2O = S-adenosyl-L-methionine + phosphate + diphosphate. Its pathway is amino-acid biosynthesis; S-adenosyl-L-methionine biosynthesis; S-adenosyl-L-methionine from L-methionine: step 1/1. Catalyzes the formation of S-adenosylmethionine from methionine and ATP. The reaction comprises two steps that are both catalyzed by the same enzyme: formation of S-adenosylmethionine (AdoMet) and triphosphate, and subsequent hydrolysis of the triphosphate. This is S-adenosylmethionine synthase 3 (SAM3) from Solanum lycopersicum (Tomato).